The following is a 278-amino-acid chain: MSVPTVLQKILARKAEEVAERRARVNLAEVERLARSADAPRGFANALLERAKRKEPAVIAEIKKASPSKGVLREHFVPAEIARSYEAGGAACLSVLTDVDFFQGADAYLKEARAACALPVIRKDFMIDPYQIVEARAIGADCILLIVSALDDVLMAELAATAKSVGLDVLVEVHDGTELERALKTLDTPLVGINNRNLHTFEVSLETTLDLLPEIPRDRLVVTESGILNRADVELMEVSEVYAFLVGEAFMRADDPGLELKRLFFQERGGVVLGADPD.

It belongs to the TrpC family.

The enzyme catalyses 1-(2-carboxyphenylamino)-1-deoxy-D-ribulose 5-phosphate + H(+) = (1S,2R)-1-C-(indol-3-yl)glycerol 3-phosphate + CO2 + H2O. Its pathway is amino-acid biosynthesis; L-tryptophan biosynthesis; L-tryptophan from chorismate: step 4/5. In Pseudomonas aeruginosa (strain LESB58), this protein is Indole-3-glycerol phosphate synthase.